A 115-amino-acid chain; its full sequence is Ribonuclease P protein component (115 aa).

It belongs to the RnpA family. As to quaternary structure, consists of a catalytic RNA component (M1 or rnpB) and a protein subunit.

It carries out the reaction Endonucleolytic cleavage of RNA, removing 5'-extranucleotides from tRNA precursor.. In terms of biological role, RNaseP catalyzes the removal of the 5'-leader sequence from pre-tRNA to produce the mature 5'-terminus. It can also cleave other RNA substrates such as 4.5S RNA. The protein component plays an auxiliary but essential role in vivo by binding to the 5'-leader sequence and broadening the substrate specificity of the ribozyme. This chain is Ribonuclease P protein component, found in Baumannia cicadellinicola subsp. Homalodisca coagulata.